Consider the following 280-residue polypeptide: DCN1-like protein 4 (280 aa).

The segment at 37 to 71 (GPESHGTACCSRAMPPRKKRRPTAGDDLSAKKSRQ) is disordered. The region spanning 89 to 275 (FSSKRCLEWF…LLDEFVEWYK (187 aa)) is the DCUN1 domain.

As to quaternary structure, may interact (via the DCUN1 domain) with unneddylated cullins.

It is found in the nucleus. Functionally, contributes to the neddylation of all cullins by transferring NEDD8 from N-terminally acetylated NEDD8-conjugating E2s enzyme to different cullin C-terminal domain-RBX complexes. This is DCN1-like protein 4 from Danio rerio (Zebrafish).